The following is a 676-amino-acid chain: Probable ERAD-associated E3 ubiquitin-protein ligase ASI1 (676 aa).

Over 1 to 78 (MSTNILQHVK…TLQLAKVGIR (78 aa)) the chain is Perinuclear space. N-linked (GlcNAc...) asparagine glycosylation is found at asparagine 24, asparagine 34, asparagine 46, and asparagine 66. The chain crosses the membrane as a helical span at residues 79 to 99 (MFFSYSVSKYAVLCFSTAIIL). Residues 100–126 (NRLTVMSSLRSNSTNIRLPLWSKTLLH) lie on the Nuclear side of the membrane. A helical transmembrane segment spans residues 127-147 (LVATLSLVKALLQILSQFGLM). The Perinuclear space segment spans residues 148–156 (HELHVSDTD). The chain crosses the membrane as a helical span at residues 157-177 (FYALSVYLFVALSDCIEIFIS). The Nuclear segment spans residues 178–181 (STTN). A helical membrane pass occupies residues 182-202 (VPSLICSDFSIWGLSLNLYII). At 203–277 (SKMPAGQQHI…NICLIHNYFP (75 aa)) the chain is on the perinuclear space side. Residues 278–298 (GFFYISTILLASIGIFLKALF) form a helical membrane-spanning segment. The Nuclear portion of the chain corresponds to 299-676 (TSNPFRSLYS…VKGYSKLNIV (378 aa)). An RING-type; atypical zinc finger spans residues 624-664 (CLICKVNKRNIVTWPCRCLALCDDCRISLGYKGFATCVSCD).

As to quaternary structure, component of the Asi complex, which contains ASI1, ASI2 and ASI3. Interacts directly with ASI1.

Its subcellular location is the nucleus inner membrane. The catalysed reaction is S-ubiquitinyl-[E2 ubiquitin-conjugating enzyme]-L-cysteine + [acceptor protein]-L-lysine = [E2 ubiquitin-conjugating enzyme]-L-cysteine + N(6)-ubiquitinyl-[acceptor protein]-L-lysine.. Its function is as follows. Part of the nuclear inner membrane (INM)-specific branch of the ER-associated degradation (ERAD) pathway, required for the elimination of misfolded proteins in the INM, a specialized ER subdomain. Required for ERG11 degradation. Negative regulator of SPS-sensor signaling. Together with ASI2 and ASI3, prevents the unprocessed precursor forms of STP1 and STP2 that escape cytoplasmic anchoring from inducing SPS-sensor-regulated genes in the absence of inducing signals. Controls amino acid permease (AAP) gene expression in response to amino acid availability, a process mediated by the transcription factors STP1 and STP1. The sequence is that of Probable ERAD-associated E3 ubiquitin-protein ligase ASI1 (ASI3) from Saccharomyces cerevisiae (strain ATCC 204508 / S288c) (Baker's yeast).